The following is a 1055-amino-acid chain: DIS3-like exonuclease 2 (1055 aa).

Disordered stretches follow at residues 1 to 109 (MKSA…SSPE) and 229 to 249 (SAAK…KARQ). The span at 17 to 32 (HKKKRNRPQKQNRRSK) shows a compositional bias: basic residues. Residues 39–59 (EDAHVEESLDGRDSSRSKAKD) show a composition bias toward basic and acidic residues. The span at 97–108 (PRRSASPLLSSP) shows a compositional bias: low complexity. Residues aspartate 488 and aspartate 497 each contribute to the Mg(2+) site.

It belongs to the RNR ribonuclease family. DIS3L2 subfamily. The cofactor is Mg(2+). Mn(2+) serves as cofactor. As to expression, widely expressed.

It is found in the cytoplasm. It localises to the P-body. In terms of biological role, 3'-5'-exoribonuclease that specifically recognizes RNAs polyuridylated at their 3' end and mediates their degradation. Component of an exosome-independent RNA degradation pathway that mediates degradation of cytoplasmic mRNAs that have been deadenylated and subsequently uridylated at their 3'. The polypeptide is DIS3-like exonuclease 2 (SOV) (Arabidopsis thaliana (Mouse-ear cress)).